A 164-amino-acid chain; its full sequence is Phosphopantetheine adenylyltransferase (164 aa).

Serine 10 is a binding site for substrate. ATP-binding positions include 10–11 (SF) and histidine 18. The substrate site is built by lysine 42, threonine 79, and arginine 93. Residues 94–96 (GLR), glutamate 104, and 129–135 (VRPITAS) each bind ATP.

This sequence belongs to the bacterial CoaD family. As to quaternary structure, homohexamer. Requires Mg(2+) as cofactor.

The protein localises to the cytoplasm. It carries out the reaction (R)-4'-phosphopantetheine + ATP + H(+) = 3'-dephospho-CoA + diphosphate. It participates in cofactor biosynthesis; coenzyme A biosynthesis; CoA from (R)-pantothenate: step 4/5. Reversibly transfers an adenylyl group from ATP to 4'-phosphopantetheine, yielding dephospho-CoA (dPCoA) and pyrophosphate. The chain is Phosphopantetheine adenylyltransferase from Bradyrhizobium sp. (strain ORS 278).